A 107-amino-acid polypeptide reads, in one-letter code: Serine palmitoyltransferase-regulating protein TSC3 (107 aa).

The helical transmembrane segment at valine 72–leucine 92 threads the bilayer.

It is found in the endoplasmic reticulum membrane. Its function is as follows. Stimulates the activity of serine palmitoyltransferase (SPT). The polypeptide is Serine palmitoyltransferase-regulating protein TSC3 (TSC3) (Eremothecium gossypii (strain ATCC 10895 / CBS 109.51 / FGSC 9923 / NRRL Y-1056) (Yeast)).